The sequence spans 82 residues: Small ribosomal subunit protein uS17 (82 aa).

Belongs to the universal ribosomal protein uS17 family. Part of the 30S ribosomal subunit.

In terms of biological role, one of the primary rRNA binding proteins, it binds specifically to the 5'-end of 16S ribosomal RNA. This is Small ribosomal subunit protein uS17 from Azorhizobium caulinodans (strain ATCC 43989 / DSM 5975 / JCM 20966 / LMG 6465 / NBRC 14845 / NCIMB 13405 / ORS 571).